The primary structure comprises 246 residues: MYILNKFIRRTVIFFFFCYLPIASSESKKIEQPLLTQKYYGLRLGTTRVIYKEDAPSTSFWIMNEKEYPILVQTQVYNDDKSSKAPFIVTPPILKVESNARTRLKVIPTSNLFNKNEESLYWLCVKGVPPLNDNESNNKNNITTNLNVNVVTNSCIKLIYRPKTIDLTTMEIADKLKLERKGNSIVIKNPTSSYVNIANIKSGNLSFNIPNGYIEPFGYAQLPGGVHSKITLTILDDNGAEIIRDY.

The N-terminal stretch at 1–24 (MYILNKFIRRTVIFFFFCYLPIAS) is a signal peptide. A disulfide bond links Cys-124 and Cys-155.

Belongs to the periplasmic pilus chaperone family.

It is found in the periplasm. Its function is as follows. Required for the biogenesis of the SefA (SEF14) fimbria. The polypeptide is Chaperone protein SefB (sefB) (Salmonella enteritidis).